Reading from the N-terminus, the 73-residue chain is Homeodomain-only protein (73 aa).

The homeobox; degenerate DNA-binding region spans 3-62 (AETASGPTEDQVEILEYNFNKVDKHPDSTTLCLIAAEAGLSEEETQKWFKQRLAKWRRSE).

Interacts with serum response factor (SRF). Component of a large complex containing histone deacetylases such as HDAC2. Interacts with the acetylated forms of HSPA1A and HSPA1B. Interacts with HSPA8. As to expression, widely expressed. Expressed in the heart, brain, placenta, lung, skeletal and smooth muscles, uterus, urinary bladder, kidney and spleen. Down-regulated in some types of cancer such as lung cancer, choriocarcinoma, head and neck squamous cell carcinoma and oral squamous cell carcinoma.

The protein localises to the nucleus. It localises to the cytoplasm. Its function is as follows. Atypical homeodomain protein which does not bind DNA and is required to modulate cardiac growth and development. Acts via its interaction with SRF, thereby modulating the expression of SRF-dependent cardiac-specific genes and cardiac development. Prevents SRF-dependent transcription either by inhibiting SRF binding to DNA or by recruiting histone deacetylase (HDAC) proteins that prevent transcription by SRF. Overexpression causes cardiac hypertrophy. May act as a tumor suppressor. Acts as a co-chaperone for HSPA1A and HSPA1B chaperone proteins and assists in chaperone-mediated protein refolding. The chain is Homeodomain-only protein (HOPX) from Homo sapiens (Human).